We begin with the raw amino-acid sequence, 138 residues long: ATP synthase epsilon chain (138 aa).

The protein belongs to the ATPase epsilon chain family. In terms of assembly, F-type ATPases have 2 components, CF(1) - the catalytic core - and CF(0) - the membrane proton channel. CF(1) has five subunits: alpha(3), beta(3), gamma(1), delta(1), epsilon(1). CF(0) has three main subunits: a, b and c.

The protein localises to the cell inner membrane. Functionally, produces ATP from ADP in the presence of a proton gradient across the membrane. This is ATP synthase epsilon chain from Bartonella quintana (strain Toulouse) (Rochalimaea quintana).